Here is a 359-residue protein sequence, read N- to C-terminus: 3-isopropylmalate dehydrogenase (359 aa).

4 residues coordinate substrate: Arg97, Arg107, Arg135, and Asp224. The Mg(2+) site is built by Asp224, Asp248, and Asp252. NAD(+) is bound at residue 282-294; that stretch reads GSAPDIAGKDIAN.

The protein belongs to the isocitrate and isopropylmalate dehydrogenases family. LeuB type 1 subfamily. As to quaternary structure, homodimer. The cofactor is Mg(2+). Mn(2+) is required as a cofactor.

It localises to the cytoplasm. The catalysed reaction is (2R,3S)-3-isopropylmalate + NAD(+) = 4-methyl-2-oxopentanoate + CO2 + NADH. It participates in amino-acid biosynthesis; L-leucine biosynthesis; L-leucine from 3-methyl-2-oxobutanoate: step 3/4. Its function is as follows. Catalyzes the oxidation of 3-carboxy-2-hydroxy-4-methylpentanoate (3-isopropylmalate) to 3-carboxy-4-methyl-2-oxopentanoate. The product decarboxylates to 4-methyl-2 oxopentanoate. This chain is 3-isopropylmalate dehydrogenase, found in Prochlorococcus marinus (strain NATL2A).